A 99-amino-acid polypeptide reads, in one-letter code: Signal recognition particle 19 kDa protein (99 aa).

It belongs to the SRP19 family. In terms of assembly, part of the signal recognition particle protein translocation system, which is composed of SRP and FtsY. Archaeal SRP consists of a 7S RNA molecule of 300 nucleotides and two protein subunits: SRP54 and SRP19.

It localises to the cytoplasm. Functionally, involved in targeting and insertion of nascent membrane proteins into the cytoplasmic membrane. Binds directly to 7S RNA and mediates binding of the 54 kDa subunit of the SRP. The chain is Signal recognition particle 19 kDa protein from Pyrococcus abyssi (strain GE5 / Orsay).